The sequence spans 645 residues: Transcription factor AN6788 (645 aa).

The segment at 1–21 (MPQKAQPQPRESPFKPARQQP) is disordered. The zn(2)-C6 fungal-type DNA-binding region spans 25–52 (CEECRKRKARCDRAKPQCGSCMMTGRVC). Residues 113–131 (PDFEPNSHPRHSQSHDRRQ) show a composition bias toward basic and acidic residues. Positions 113-170 (PDFEPNSHPRHSQSHDRRQQSGPDSSPDTQHELPFLQSPPAARDADSAERALLPSPVS) are disordered.

Its subcellular location is the nucleus. Functionally, transcription factors AN6788 and AN6790 act in tandem to regulate the expression of the non-reducing polyketide synthase pkfA from the aspernidine A biosynthesis cluster. They do not control the expression of the other genes involved in aspernidine A biosynthesis, nor do they regulate the expression of the highly reducing polyketide synthase AN6791 and the esterase AN6793 with which they are predicted to form a secondary metabolite biosynthesis cluster. In Emericella nidulans (strain FGSC A4 / ATCC 38163 / CBS 112.46 / NRRL 194 / M139) (Aspergillus nidulans), this protein is Transcription factor AN6788.